Reading from the N-terminus, the 158-residue chain is Probable cyclic pyranopterin monophosphate synthase (158 aa).

Substrate is bound by residues 75–77 (MCH) and 111–112 (ME). Aspartate 126 is an active-site residue.

Belongs to the MoaC family. In terms of assembly, homohexamer; trimer of dimers.

The catalysed reaction is (8S)-3',8-cyclo-7,8-dihydroguanosine 5'-triphosphate = cyclic pyranopterin phosphate + diphosphate. Its pathway is cofactor biosynthesis; molybdopterin biosynthesis. Its function is as follows. Catalyzes the conversion of (8S)-3',8-cyclo-7,8-dihydroguanosine 5'-triphosphate to cyclic pyranopterin monophosphate (cPMP). This is Probable cyclic pyranopterin monophosphate synthase from Methanocorpusculum labreanum (strain ATCC 43576 / DSM 4855 / Z).